Reading from the N-terminus, the 220-residue chain is GTP cyclohydrolase 1 (220 aa).

Cys109, His112, and Cys180 together coordinate Zn(2+).

It belongs to the GTP cyclohydrolase I family. As to quaternary structure, toroid-shaped homodecamer, composed of two pentamers of five dimers.

It catalyses the reaction GTP + H2O = 7,8-dihydroneopterin 3'-triphosphate + formate + H(+). The protein operates within cofactor biosynthesis; 7,8-dihydroneopterin triphosphate biosynthesis; 7,8-dihydroneopterin triphosphate from GTP: step 1/1. In Yersinia enterocolitica serotype O:8 / biotype 1B (strain NCTC 13174 / 8081), this protein is GTP cyclohydrolase 1.